Consider the following 441-residue polypeptide: tRNA modification GTPase MnmE (441 aa).

The (6S)-5-formyl-5,6,7,8-tetrahydrofolate site is built by Arg21, Glu79, and Lys118. Positions 214 to 367 constitute a TrmE-type G domain; that stretch reads GIHITILGAP…LVAELARVVE (154 aa). GTP-binding positions include 224 to 229, 243 to 249, and 268 to 271; these read NAGKSS, SAQAGTT, and DTAG. Residues Ser228 and Thr249 each coordinate Mg(2+). Lys441 is a binding site for (6S)-5-formyl-5,6,7,8-tetrahydrofolate.

Belongs to the TRAFAC class TrmE-Era-EngA-EngB-Septin-like GTPase superfamily. TrmE GTPase family. As to quaternary structure, homodimer. Heterotetramer of two MnmE and two MnmG subunits. It depends on K(+) as a cofactor.

It localises to the cytoplasm. Exhibits a very high intrinsic GTPase hydrolysis rate. Involved in the addition of a carboxymethylaminomethyl (cmnm) group at the wobble position (U34) of certain tRNAs, forming tRNA-cmnm(5)s(2)U34. The chain is tRNA modification GTPase MnmE from Paramagnetospirillum magneticum (strain ATCC 700264 / AMB-1) (Magnetospirillum magneticum).